We begin with the raw amino-acid sequence, 218 residues long: N-(5'-phosphoribosyl)anthranilate isomerase (218 aa).

It belongs to the TrpF family.

The catalysed reaction is N-(5-phospho-beta-D-ribosyl)anthranilate = 1-(2-carboxyphenylamino)-1-deoxy-D-ribulose 5-phosphate. The protein operates within amino-acid biosynthesis; L-tryptophan biosynthesis; L-tryptophan from chorismate: step 3/5. The polypeptide is N-(5'-phosphoribosyl)anthranilate isomerase (Bordetella parapertussis (strain 12822 / ATCC BAA-587 / NCTC 13253)).